The following is a 301-amino-acid chain: Glycerol-3-phosphate dehydrogenase [NAD(P)+] (301 aa).

3 residues coordinate NADPH: W13, R33, and K78. Sn-glycerol 3-phosphate is bound by residues K78 and G106. A110 contacts NADPH. Sn-glycerol 3-phosphate is bound by residues K161, D214, S224, R225, and N226. Catalysis depends on K161, which acts as the Proton acceptor. An NADPH-binding site is contributed by R225. An NADPH-binding site is contributed by E251.

This sequence belongs to the NAD-dependent glycerol-3-phosphate dehydrogenase family.

Its subcellular location is the cytoplasm. The enzyme catalyses sn-glycerol 3-phosphate + NAD(+) = dihydroxyacetone phosphate + NADH + H(+). It catalyses the reaction sn-glycerol 3-phosphate + NADP(+) = dihydroxyacetone phosphate + NADPH + H(+). Its pathway is membrane lipid metabolism; glycerophospholipid metabolism. Its function is as follows. Catalyzes the reduction of the glycolytic intermediate dihydroxyacetone phosphate (DHAP) to sn-glycerol 3-phosphate (G3P), the key precursor for phospholipid synthesis. The chain is Glycerol-3-phosphate dehydrogenase [NAD(P)+] from Synechococcus sp. (strain RCC307).